A 313-amino-acid polypeptide reads, in one-letter code: Ribose-phosphate pyrophosphokinase (313 aa).

Residues 37–39 (DGE) and 96–97 (RQ) contribute to the ATP site. Mg(2+)-binding residues include H131 and D170. K193 is an active-site residue. Residues R195, D219, and 223–227 (DTAGT) each bind D-ribose 5-phosphate.

The protein belongs to the ribose-phosphate pyrophosphokinase family. Class I subfamily. In terms of assembly, homohexamer. Requires Mg(2+) as cofactor.

The protein localises to the cytoplasm. It catalyses the reaction D-ribose 5-phosphate + ATP = 5-phospho-alpha-D-ribose 1-diphosphate + AMP + H(+). Its pathway is metabolic intermediate biosynthesis; 5-phospho-alpha-D-ribose 1-diphosphate biosynthesis; 5-phospho-alpha-D-ribose 1-diphosphate from D-ribose 5-phosphate (route I): step 1/1. Involved in the biosynthesis of the central metabolite phospho-alpha-D-ribosyl-1-pyrophosphate (PRPP) via the transfer of pyrophosphoryl group from ATP to 1-hydroxyl of ribose-5-phosphate (Rib-5-P). The protein is Ribose-phosphate pyrophosphokinase of Pseudomonas syringae pv. tomato (strain ATCC BAA-871 / DC3000).